We begin with the raw amino-acid sequence, 207 residues long: Large ribosomal subunit protein uL4 (207 aa).

The interval 49–78 (HAVKNRSAVSGGGRKPWRQKGTGRARQGSI) is disordered.

This sequence belongs to the universal ribosomal protein uL4 family. In terms of assembly, part of the 50S ribosomal subunit.

In terms of biological role, one of the primary rRNA binding proteins, this protein initially binds near the 5'-end of the 23S rRNA. It is important during the early stages of 50S assembly. It makes multiple contacts with different domains of the 23S rRNA in the assembled 50S subunit and ribosome. Its function is as follows. Forms part of the polypeptide exit tunnel. This Streptococcus suis (strain 98HAH33) protein is Large ribosomal subunit protein uL4.